Reading from the N-terminus, the 279-residue chain is MTKADTIFKENIERILKEGVFSEQARPKYKDGTVANSKYVTGAFSEYDLSKGEFPITTLRPIAIKSAIKEVLWIYQDQSNSLEVLNDKYNVHYWNDWEVGDTGTIGERYGAVVKKHDIINKLLKQLETNPWNRRNIISLWDYQAFEETDGLLPCAFQTMFDVRRVDGEIYLDATLTQRSNDMLVAHHINAMQYVALQMMIAKHFGWKVGKFFYFINNLHIYDNQFEQAQELLRREPSNCQPRLVLNVPDGTNFFDIKAEDFELVDYDPVKPQLKFDLAI.

Residue 133 to 134 coordinates dUMP; the sequence is RR. C154 acts as the Nucleophile in catalysis. DUMP-binding positions include 178–181, N189, and 219–221; these read RSND and HIY. D181 is a binding site for (6R)-5,10-methylene-5,6,7,8-tetrahydrofolate. Residue A278 coordinates (6R)-5,10-methylene-5,6,7,8-tetrahydrofolate.

It belongs to the thymidylate synthase family. Bacterial-type ThyA subfamily. Homodimer.

It is found in the cytoplasm. It catalyses the reaction dUMP + (6R)-5,10-methylene-5,6,7,8-tetrahydrofolate = 7,8-dihydrofolate + dTMP. The protein operates within pyrimidine metabolism; dTTP biosynthesis. Its function is as follows. Catalyzes the reductive methylation of 2'-deoxyuridine-5'-monophosphate (dUMP) to 2'-deoxythymidine-5'-monophosphate (dTMP) while utilizing 5,10-methylenetetrahydrofolate (mTHF) as the methyl donor and reductant in the reaction, yielding dihydrofolate (DHF) as a by-product. This enzymatic reaction provides an intracellular de novo source of dTMP, an essential precursor for DNA biosynthesis. This chain is Thymidylate synthase, found in Streptococcus pneumoniae (strain 70585).